The sequence spans 473 residues: Photosystem II CP43 reaction center protein (473 aa).

Residues 1–14 (MKTLYSLRRFYHVE) constitute a propeptide that is removed on maturation. Position 15 is an N-acetylthreonine (Thr15). Position 15 is a phosphothreonine (Thr15). 5 helical membrane passes run 69–93 (LFEVAHFVPEKPMYEQGLILLPHLA), 134–155 (LLGPETLEESFPFFGYVWKDRN), 178–200 (KALYFGGVYDTWAPGGGDVRKIT), 255–275 (KPFAWARRAFVWSGEAYLSYS), and 291–312 (WFNNTAYPSEFYGPTGPEASQA). Glu367 lines the [CaMn4O5] cluster pocket. The chain crosses the membrane as a helical span at residues 447–471 (RARAAAAGFEKGIDRDFEPVLSMTP).

Belongs to the PsbB/PsbC family. PsbC subfamily. In terms of assembly, PSII is composed of 1 copy each of membrane proteins PsbA, PsbB, PsbC, PsbD, PsbE, PsbF, PsbH, PsbI, PsbJ, PsbK, PsbL, PsbM, PsbT, PsbX, PsbY, PsbZ, Psb30/Ycf12, at least 3 peripheral proteins of the oxygen-evolving complex and a large number of cofactors. It forms dimeric complexes. Requires Binds multiple chlorophylls and provides some of the ligands for the Ca-4Mn-5O cluster of the oxygen-evolving complex. It may also provide a ligand for a Cl- that is required for oxygen evolution. PSII binds additional chlorophylls, carotenoids and specific lipids. as cofactor.

The protein resides in the plastid. It localises to the chloroplast thylakoid membrane. Its function is as follows. One of the components of the core complex of photosystem II (PSII). It binds chlorophyll and helps catalyze the primary light-induced photochemical processes of PSII. PSII is a light-driven water:plastoquinone oxidoreductase, using light energy to abstract electrons from H(2)O, generating O(2) and a proton gradient subsequently used for ATP formation. The sequence is that of Photosystem II CP43 reaction center protein from Ipomoea purpurea (Common morning glory).